The following is an 828-amino-acid chain: Hapless 2 (828 aa).

The first 32 residues, 1–32 (MKNKLINLRSKHIYKLIIIIFFCIILKYYKWC), serve as a signal peptide directing secretion. At 33–680 (DFKNKVFFIQ…INTVKTLIGK (648 aa)) the chain is on the extracellular side. Cys-53 and Cys-62 are oxidised to a cystine. A glycan (N-linked (GlcNAc...) asparagine) is linked at Asn-74. Disulfide bonds link Cys-142–Cys-209, Cys-170–Cys-381, Cys-172–Cys-191, and Cys-363–Cys-388. A cd loop; involved in gamete fusion region spans residues 174–191 (TYNYFKDDEFIKRAKLKC). Asn-233, Asn-250, Asn-264, Asn-293, and Asn-333 each carry an N-linked (GlcNAc...) asparagine glycan. Asn-479, Asn-516, Asn-531, and Asn-539 each carry an N-linked (GlcNAc...) asparagine glycan. A disulfide bridge links Cys-546 with Cys-592. A helical membrane pass occupies residues 681 to 701 (FAIIAILIILAPALIPLLPFF). Residues 702 to 828 (LNFFFLFIST…SGKSKIPPLR (127 aa)) lie on the Cytoplasmic side of the membrane. Residues 773 to 828 (RKNKKKFNKNNISSNIKHKKGGKKVKQKEPNRNSNHTSHEYADTSPSGKSKIPPLR) form a disordered region. Basic residues predominate over residues 788–798 (IKHKKGGKKVK). The segment covering 799 to 814 (QKEPNRNSNHTSHEYA) has biased composition (basic and acidic residues).

This sequence belongs to the HAP2/GCS1 family.

It is found in the cell membrane. In terms of biological role, during fertilization, required on male gametes for their fusion with female gametes, and for subsequent ookinete formation in the host. Thereby, required for mosquito-mediated transmission to other animals. Probably initiates the fusion of gamete cell membranes by inserting part of its extracellular domain into the cell membrane of a female gamete. This Plasmodium berghei (strain Anka) protein is Hapless 2.